A 1342-amino-acid chain; its full sequence is DNA-directed RNA polymerase subunit beta (1342 aa).

Belongs to the RNA polymerase beta chain family. In terms of assembly, the RNAP catalytic core consists of 2 alpha, 1 beta, 1 beta' and 1 omega subunit. When a sigma factor is associated with the core the holoenzyme is formed, which can initiate transcription.

It catalyses the reaction RNA(n) + a ribonucleoside 5'-triphosphate = RNA(n+1) + diphosphate. Functionally, DNA-dependent RNA polymerase catalyzes the transcription of DNA into RNA using the four ribonucleoside triphosphates as substrates. This is DNA-directed RNA polymerase subunit beta from Pectobacterium carotovorum subsp. carotovorum (strain PC1).